The following is a 145-amino-acid chain: Probable low molecular weight protein-tyrosine-phosphatase EpsP (145 aa).

Cys-9 (nucleophile) is an active-site residue. The active site involves Arg-15. Asp-114 acts as the Proton donor in catalysis.

This sequence belongs to the low molecular weight phosphotyrosine protein phosphatase family.

The enzyme catalyses O-phospho-L-tyrosyl-[protein] + H2O = L-tyrosyl-[protein] + phosphate. It functions in the pathway glycan metabolism; exopolysaccharide biosynthesis. Its function is as follows. May be involved in assembly or function of the EPS I polymerization/export complex and/or the EpsB ATPase. Alternatively it may function in the removal of the terminal phosphate from C55-isoprenyl pyrophosphate in order to recycle the C55-isoprenyl phosphate lipid carrier used in the synthesis of polysaccharide repeat units. This Ralstonia solanacearum (Pseudomonas solanacearum) protein is Probable low molecular weight protein-tyrosine-phosphatase EpsP (epsP).